The sequence spans 222 residues: Small ribosomal subunit protein eS1 (222 aa).

Belongs to the eukaryotic ribosomal protein eS1 family.

In Pyrobaculum neutrophilum (strain DSM 2338 / JCM 9278 / NBRC 100436 / V24Sta) (Thermoproteus neutrophilus), this protein is Small ribosomal subunit protein eS1.